Here is a 410-residue protein sequence, read N- to C-terminus: Sprouty-related, EVH1 domain-containing protein 3 (410 aa).

Residues 1 to 113 enclose the WH1 domain; the sequence is MVRVRAVVMA…KSLLAALAAL (113 aa). Residues 117–210 form a disordered region; it reads SLTPSSSSSS…PEPSEPLAGA (94 aa). Composition is skewed to low complexity over residues 120–130 and 147–165; these read PSSSSSSSSPS and DSSS…AAAP. A KBD domain is found at 195–244; sequence LPFTGIPEPSEPLAGAGGLGWGGRGYEDYRRSGPPAPLALSTCVVRFAKT. Arg-240 carries the post-translational modification Asymmetric dimethylarginine. At Arg-248 the chain carries Omega-N-methylarginine. The tract at residues 258–288 is disordered; sequence LPAPLTEAAPPAPPARPPPGPGPSSAPAKAS. The segment covering 267–281 has biased composition (pro residues); the sequence is PPAPPARPPPGPGPS. The SPR domain occupies 296–407; it reads RCVHCRALFR…CAGCGGRHEE (112 aa).

In terms of assembly, interacts with palmitoyltransferase ZDHHC17/HIP14; the interaction leads to palmitoylation of SPRED3. Post-translationally, phosphorylated on tyrosine. In terms of processing, palmitoylated by ZDHHC17/HIP14. Ubiquitinated.

It is found in the cell membrane. In terms of biological role, tyrosine kinase substrate that inhibits growth-factor-mediated activation of MAP kinase. Inhibits fibroblast growth factor (FGF)-induced retinal lens fiber differentiation, probably by inhibiting FGF-mediated phosphorylation of ERK1/2. Inhibits TGFB-induced epithelial-to-mesenchymal transition in lens epithelial cells. This is Sprouty-related, EVH1 domain-containing protein 3 (SPRED3) from Homo sapiens (Human).